The sequence spans 302 residues: N-acetylmuramic acid 6-phosphate etherase (302 aa).

One can recognise an SIS domain in the interval 57 to 220 (IADRFRSNGR…TTGAMIRIGK (164 aa)). E85 acts as the Proton donor in catalysis. Residue E116 is part of the active site.

Belongs to the GCKR-like family. MurNAc-6-P etherase subfamily. Homodimer.

It carries out the reaction N-acetyl-D-muramate 6-phosphate + H2O = N-acetyl-D-glucosamine 6-phosphate + (R)-lactate. The protein operates within amino-sugar metabolism; N-acetylmuramate degradation. Functionally, specifically catalyzes the cleavage of the D-lactyl ether substituent of MurNAc 6-phosphate, producing GlcNAc 6-phosphate and D-lactate. The protein is N-acetylmuramic acid 6-phosphate etherase of Rhodopirellula baltica (strain DSM 10527 / NCIMB 13988 / SH1).